Consider the following 422-residue polypeptide: Adenylosuccinate synthetase (422 aa).

GTP contacts are provided by residues 11–17 (GDEGKGK) and 39–41 (GHT). Asp12 (proton acceptor) is an active-site residue. Mg(2+) contacts are provided by Asp12 and Gly39. Residues 12–15 (DEGK), 37–40 (NAGH), Thr129, Arg143, Asn219, Thr234, and Arg298 each bind IMP. The active-site Proton donor is His40. Substrate is bound at residue 294–300 (VTTGRKR). GTP contacts are provided by residues Arg300, 326 to 328 (KLD), and 411 to 413 (GTG).

The protein belongs to the adenylosuccinate synthetase family. Homodimer. Mg(2+) serves as cofactor.

The protein resides in the cytoplasm. The enzyme catalyses IMP + L-aspartate + GTP = N(6)-(1,2-dicarboxyethyl)-AMP + GDP + phosphate + 2 H(+). It functions in the pathway purine metabolism; AMP biosynthesis via de novo pathway; AMP from IMP: step 1/2. Its function is as follows. Plays an important role in the de novo pathway and in the salvage pathway of purine nucleotide biosynthesis. Catalyzes the first committed step in the biosynthesis of AMP from IMP. In Talaromyces stipitatus (strain ATCC 10500 / CBS 375.48 / QM 6759 / NRRL 1006) (Penicillium stipitatum), this protein is Adenylosuccinate synthetase.